Here is a 432-residue protein sequence, read N- to C-terminus: Glutamine synthetase, chloroplastic (432 aa).

Residues Ile-79–Gly-159 enclose the GS beta-grasp domain. The 267-residue stretch at Lys-166–Val-432 folds into the GS catalytic domain.

It belongs to the glutamine synthetase family. As to quaternary structure, homooctamer.

The protein resides in the plastid. The protein localises to the chloroplast. The enzyme catalyses L-glutamate + NH4(+) + ATP = L-glutamine + ADP + phosphate + H(+). Functionally, the light-modulated chloroplast enzyme, encoded by a nuclear gene and expressed primarily in leaves, is responsible for the reassimilation of the ammonia generated by photorespiration. This Daucus carota (Wild carrot) protein is Glutamine synthetase, chloroplastic (GLN2).